Reading from the N-terminus, the 141-residue chain is Aspartate 1-decarboxylase (141 aa).

Residue serine 25 is the Schiff-base intermediate with substrate; via pyruvic acid of the active site. Serine 25 is modified (pyruvic acid (Ser)). Residue threonine 57 coordinates substrate. Catalysis depends on tyrosine 58, which acts as the Proton donor. A substrate-binding site is contributed by 73 to 75 (GAA).

The protein belongs to the PanD family. As to quaternary structure, heterooctamer of four alpha and four beta subunits. It depends on pyruvate as a cofactor. Post-translationally, is synthesized initially as an inactive proenzyme, which is activated by self-cleavage at a specific serine bond to produce a beta-subunit with a hydroxyl group at its C-terminus and an alpha-subunit with a pyruvoyl group at its N-terminus.

It localises to the cytoplasm. It carries out the reaction L-aspartate + H(+) = beta-alanine + CO2. It participates in cofactor biosynthesis; (R)-pantothenate biosynthesis; beta-alanine from L-aspartate: step 1/1. In terms of biological role, catalyzes the pyruvoyl-dependent decarboxylation of aspartate to produce beta-alanine. The sequence is that of Aspartate 1-decarboxylase from Pseudarthrobacter chlorophenolicus (strain ATCC 700700 / DSM 12829 / CIP 107037 / JCM 12360 / KCTC 9906 / NCIMB 13794 / A6) (Arthrobacter chlorophenolicus).